Reading from the N-terminus, the 362-residue chain is tRNA-specific 2-thiouridylase MnmA 3 (362 aa).

ATP-binding positions include 11–18 (GMSGGIDS) and Met-37. The active-site Nucleophile is the Cys-91. The cysteines at positions 91 and 188 are disulfide-linked. Residue Gly-115 participates in ATP binding. An interaction with tRNA region spans residues 137–139 (KDQ). The Cysteine persulfide intermediate role is filled by Cys-188. The interval 296–297 (RY) is interaction with tRNA.

The protein belongs to the MnmA/TRMU family.

It is found in the cytoplasm. It carries out the reaction S-sulfanyl-L-cysteinyl-[protein] + uridine(34) in tRNA + AH2 + ATP = 2-thiouridine(34) in tRNA + L-cysteinyl-[protein] + A + AMP + diphosphate + H(+). Its function is as follows. Catalyzes the 2-thiolation of uridine at the wobble position (U34) of tRNA, leading to the formation of s(2)U34. The protein is tRNA-specific 2-thiouridylase MnmA 3 of Bacteroides fragilis (strain YCH46).